Here is a 301-residue protein sequence, read N- to C-terminus: 33 kDa chaperonin (301 aa).

2 cysteine pairs are disulfide-bonded: Cys-244-Cys-246 and Cys-277-Cys-280.

Belongs to the HSP33 family. In terms of processing, under oxidizing conditions two disulfide bonds are formed involving the reactive cysteines. Under reducing conditions zinc is bound to the reactive cysteines and the protein is inactive.

The protein localises to the cytoplasm. Redox regulated molecular chaperone. Protects both thermally unfolding and oxidatively damaged proteins from irreversible aggregation. Plays an important role in the bacterial defense system toward oxidative stress. The polypeptide is 33 kDa chaperonin (Geobacter sulfurreducens (strain ATCC 51573 / DSM 12127 / PCA)).